A 269-amino-acid chain; its full sequence is Seven in absentia homolog 3 (269 aa).

Residues 61-132 (GSFHPHHLSH…VVPHLRQIHR (72 aa)) form an SIAH-type; degenerate zinc finger. Residues Cys107, Cys114, His126, and His131 each contribute to the Zn(2+) site.

Belongs to the SINA (Seven in absentia) family.

Its subcellular location is the mitochondrion. Negative regulator of PRKN translocation to damaged mitochondria. Acts probably by destabilizing PINK1 protein, hence inhibiting PRKN targeting to dysfunctional depolarized mitochondria. The protein is Seven in absentia homolog 3 (SIAH3) of Homo sapiens (Human).